The following is a 63-amino-acid chain: UPF0370 protein PC1_1167 (63 aa).

Residues 3-23 (WLADYWWIILIILIGMLINGI) form a helical membrane-spanning segment. The segment at 37 to 63 (NKPKLPPHRDNNDKWDDEDDDWPKKKP) is disordered.

Belongs to the UPF0370 family.

It is found in the cell membrane. This is UPF0370 protein PC1_1167 from Pectobacterium carotovorum subsp. carotovorum (strain PC1).